The primary structure comprises 642 residues: Threonine--tRNA ligase (642 aa).

Residues 1 to 61 (MIKVTFPDGN…EHDGKLQLLT (61 aa)) form the TGS domain. The tract at residues 240–539 (DHRKIGKDLD…LIEEYKGSFP (300 aa)) is catalytic. Positions 334, 385, and 516 each coordinate Zn(2+).

The protein belongs to the class-II aminoacyl-tRNA synthetase family. As to quaternary structure, homodimer. It depends on Zn(2+) as a cofactor.

The protein localises to the cytoplasm. It carries out the reaction tRNA(Thr) + L-threonine + ATP = L-threonyl-tRNA(Thr) + AMP + diphosphate + H(+). Its function is as follows. Catalyzes the attachment of threonine to tRNA(Thr) in a two-step reaction: L-threonine is first activated by ATP to form Thr-AMP and then transferred to the acceptor end of tRNA(Thr). Also edits incorrectly charged L-seryl-tRNA(Thr). This chain is Threonine--tRNA ligase, found in Acholeplasma laidlawii (strain PG-8A).